Here is a 488-residue protein sequence, read N- to C-terminus: Cobyric acid synthase (488 aa).

In terms of domain architecture, GATase cobBQ-type spans 248 to 441; the sequence is VLRVVVPALP…VHGLFDTPAA (194 aa). The active-site Nucleophile is the Cys-328. His-433 is an active-site residue.

This sequence belongs to the CobB/CobQ family. CobQ subfamily.

The protein operates within cofactor biosynthesis; adenosylcobalamin biosynthesis. Functionally, catalyzes amidations at positions B, D, E, and G on adenosylcobyrinic A,C-diamide. NH(2) groups are provided by glutamine, and one molecule of ATP is hydrogenolyzed for each amidation. The protein is Cobyric acid synthase of Burkholderia vietnamiensis (strain G4 / LMG 22486) (Burkholderia cepacia (strain R1808)).